The following is an 83-amino-acid chain: Cytochrome c5 (83 aa).

Positions 15, 18, 19, and 59 each coordinate heme c. Residues cysteine 65 and cysteine 68 are joined by a disulfide bond.

Belongs to the cytochrome c family. Homodimer. Post-translationally, binds 1 heme c group covalently per subunit.

Its function is as follows. It is unreactive with cytochrome c reductase or oxidase. This chain is Cytochrome c5, found in Azotobacter vinelandii.